A 605-amino-acid polypeptide reads, in one-letter code: Hepatocyte nuclear factor 1-alpha-A (605 aa).

The interval 1-31 is dimerization; that stretch reads MASQLSYLQRELLQALLESGVTKEALKKALA. The 32-residue stretch at 1–32 folds into the HNF-p1 domain; the sequence is MASQLSYLQRELLQALLESGVTKEALKKALAD. The tract at residues 57–81 is disordered; that stretch reads QLPNGLGESHISEDESSDDGEDFTP. Residues 85–180 enclose the POU-specific atypical domain; the sequence is KELERLSPEE…IARLFTFTEF (96 aa). Interaction with DNA regions lie at residues 128 to 130, 141 to 147, 153 to 156, 206 to 209, 266 to 268, and 273 to 276; these read QRE, HLSQHLN, KTQK, RFKW, RVY, and NRRK. A Nuclear localization signal motif is present at residues 200–208; it reads KKMRRNRFK. Positions 202-282 form a DNA-binding region, homeobox; HNF1-type; the sequence is MRRNRFKWGP…NRRKEEAFRH (81 aa). Over residues 321–335 the composition is skewed to polar residues; that stretch reads DRSAVMANSQSTPSP. Positions 321-343 are disordered; that stretch reads DRSAVMANSQSTPSPSALEPSHS. The not present in other members of the HNF1 family stretch occupies residues 448-453; the sequence is PSHQLH.

The protein belongs to the HNF1 homeobox family. As to quaternary structure, binds DNA as dimer. Forms a homodimer or heterodimer with HNF1-alpha-B. Potentially also form a heterodimer with HNF1-beta. Protein expressed in liver, stomach, small intestine, colon and kidney. Not expressed in spleen, lung, blood, heart muscle, skeletal muscle, testis and brain.

The protein localises to the nucleus. Transcriptional activator that regulates the tissue specific expression of multiple genes, especially in pancreas and liver. Binds to the hepatocyte specific promoter element HP1. Binds to the inverted palindrome 5'-GTTAATNATTAAC-3'. This Xenopus laevis (African clawed frog) protein is Hepatocyte nuclear factor 1-alpha-A (hnf1a-a).